Here is a 282-residue protein sequence, read N- to C-terminus: Pantothenate synthetase (282 aa).

30 to 37 (MGNLHEGH) is a binding site for ATP. The active-site Proton donor is the His37. Gln61 serves as a coordination point for (R)-pantoate. A beta-alanine-binding site is contributed by Gln61. 149–152 (GEKD) contributes to the ATP binding site. Residue Gln155 participates in (R)-pantoate binding. ATP contacts are provided by residues Val178 and 186–189 (KSSR).

Belongs to the pantothenate synthetase family. As to quaternary structure, homodimer.

It is found in the cytoplasm. It carries out the reaction (R)-pantoate + beta-alanine + ATP = (R)-pantothenate + AMP + diphosphate + H(+). Its pathway is cofactor biosynthesis; (R)-pantothenate biosynthesis; (R)-pantothenate from (R)-pantoate and beta-alanine: step 1/1. Its function is as follows. Catalyzes the condensation of pantoate with beta-alanine in an ATP-dependent reaction via a pantoyl-adenylate intermediate. This is Pantothenate synthetase from Marinobacter nauticus (strain ATCC 700491 / DSM 11845 / VT8) (Marinobacter aquaeolei).